A 129-amino-acid polypeptide reads, in one-letter code: Glycine cleavage system H protein (129 aa).

Residues 23–104 (TVTVGITQHA…SYSAWLFKLK (82 aa)) form the Lipoyl-binding domain. The residue at position 64 (Lys-64) is an N6-lipoyllysine.

Belongs to the GcvH family. As to quaternary structure, the glycine cleavage system is composed of four proteins: P, T, L and H. It depends on (R)-lipoate as a cofactor.

The glycine cleavage system catalyzes the degradation of glycine. The H protein shuttles the methylamine group of glycine from the P protein to the T protein. The polypeptide is Glycine cleavage system H protein (Nitrosomonas eutropha (strain DSM 101675 / C91 / Nm57)).